We begin with the raw amino-acid sequence, 289 residues long: Nodulation protein NolT (289 aa).

The first 33 residues, 1 to 33 (MFGSAHGDTTSSDTSGRRPLRLVVLPLLLALSS), serve as a signal peptide directing secretion. The N-palmitoyl cysteine moiety is linked to residue cysteine 34. A lipid anchor (S-diacylglycerol cysteine) is attached at cysteine 34. The helical transmembrane segment at 233-253 (VAVGVGAAVFAVTCYLLFIVL) threads the bilayer.

Belongs to the YscJ lipoprotein family.

The protein localises to the cell outer membrane. Its function is as follows. Regulates cultivar-specific nodulation of soybean. This chain is Nodulation protein NolT (nolT), found in Rhizobium fredii (Sinorhizobium fredii).